Reading from the N-terminus, the 408-residue chain is Aurora kinase A-B (408 aa).

A compositionally biased stretch (basic and acidic residues) spans 1–10 (MERAVKENHK). Positions 1-128 (MERAVKENHK…QGKTLAVPKE (128 aa)) are disordered. Polar residues predominate over residues 85 to 110 (GHQTSKPQGPNENRNPQQTSHSSTPN). Residues 140-390 (FEIGRPLGKG…LKGVLEHPWI (251 aa)) enclose the Protein kinase domain. ATP-binding positions include Lys150, Lys169, and 217–220 (LDYA). The active-site Proton acceptor is the Asp263. Asp281 is an ATP binding site. The activation segment stretch occupies residues 287–300 (HAPSSRRTTLCGTL).

The protein belongs to the protein kinase superfamily. Ser/Thr protein kinase family. Aurora subfamily. As to quaternary structure, interacts with kif2c and kif11. In terms of processing, phosphorylated. Autophosphorylated on a serine residue.

The protein resides in the cytoplasm. It is found in the cytoskeleton. Its subcellular location is the spindle pole. The protein localises to the microtubule organizing center. It localises to the centrosome. The enzyme catalyses L-seryl-[protein] + ATP = O-phospho-L-seryl-[protein] + ADP + H(+). The catalysed reaction is L-threonyl-[protein] + ATP = O-phospho-L-threonyl-[protein] + ADP + H(+). Functionally, mitotic serine/threonine kinases that contributes to the regulation of cell cycle progression. Associates with the centrosome and the spindle microtubules during mitosis and plays a critical role in various mitotic events including the establishment of mitotic spindle, centrosome duplication, centrosome separation as well as maturation, chromosomal alignment, spindle assembly checkpoint, and cytokinesis. Phosphorylates numerous target proteins. Important for microtubule formation and/or stabilization. The sequence is that of Aurora kinase A-B (aurka-b) from Xenopus laevis (African clawed frog).